The sequence spans 815 residues: Probable E3 ubiquitin-protein ligase hulA (815 aa).

A C2 domain is found at 1–112 (MGSNLPSQPN…EMGGDEMLTR (112 aa)). Disordered regions lie at residues 134–237 (NLST…GWER) and 253–353 (RTTT…YFVD). Low complexity-rich tracts occupy residues 165–185 (ASAAHPAASPAPIDPAASNPS) and 202–212 (APGAAAGATPT). Composition is skewed to polar residues over residues 213-226 (NTQGSRTNLSSFED) and 253-270 (RTTTWTRPSSNYNEQTQR). The WW 1 domain occupies 229 to 262 (GRLPAGWERREDNLGRTYYVDHNTRTTTWTRPSS). A compositionally biased stretch (basic and acidic residues) spans 279-294 (LERRAHQSRMLPEDRT). A compositionally biased stretch (polar residues) spans 295–308 (GANSPNLPETSQQA). Residues 324–333 (ATGATTAGTG) show a composition bias toward low complexity. WW domains lie at 333 to 366 (GELPPGWEQRTTPEGRPYFVDHNTRTTTWVDPRR) and 393 to 426 (GPLPSGWEMRLTNTARVYFVDHNTKTTTWDDPRL). In terms of domain architecture, HECT spans 482-815 (SASDLKKRLM…VEETLGFGQE (334 aa)). Cysteine 783 serves as the catalytic Glycyl thioester intermediate.

This sequence belongs to the RSP5/NEDD4 family. As to quaternary structure, interacts with creD.

The protein resides in the cytoplasm. It carries out the reaction S-ubiquitinyl-[E2 ubiquitin-conjugating enzyme]-L-cysteine + [acceptor protein]-L-lysine = [E2 ubiquitin-conjugating enzyme]-L-cysteine + N(6)-ubiquitinyl-[acceptor protein]-L-lysine.. It functions in the pathway protein modification; protein ubiquitination. Its function is as follows. E3 ubiquitin-protein ligase which accepts ubiquitin from an E2 ubiquitin-conjugating enzyme in the form of a thioester and then directly transfers the ubiquitin to targeted substrates. Probably involved in the regulatory network controlling carbon source utilization. The sequence is that of Probable E3 ubiquitin-protein ligase hulA (hulA) from Aspergillus clavatus (strain ATCC 1007 / CBS 513.65 / DSM 816 / NCTC 3887 / NRRL 1 / QM 1276 / 107).